The following is a 404-amino-acid chain: Riboflavin biosynthesis protein RibBA (404 aa).

A DHBP synthase region spans residues 1–204 (MEELKLNTIE…IRDLIAYRLK (204 aa)). D-ribulose 5-phosphate-binding positions include 30–31 (RE), D35, 143–147 (RAGHT), and E167. A Mg(2+)-binding site is contributed by E31. H146 provides a ligand contact to Mg(2+). The GTP cyclohydrolase II stretch occupies residues 205–404 (QESLVEKGVE…RMGHTLHFNK (200 aa)). Residue 255-259 (RVHSS) coordinates GTP. Residues C260, C271, and C273 each coordinate Zn(2+). Residues Q276, 298–300 (EGR), and T320 each bind GTP. Catalysis depends on D332, which acts as the Proton acceptor; for GTP cyclohydrolase activity. R334 serves as the catalytic Nucleophile; for GTP cyclohydrolase activity. Residues T355 and K360 each coordinate GTP.

It in the N-terminal section; belongs to the DHBP synthase family. The protein in the C-terminal section; belongs to the GTP cyclohydrolase II family. The cofactor is Mg(2+). It depends on Mn(2+) as a cofactor. Zn(2+) is required as a cofactor.

It catalyses the reaction D-ribulose 5-phosphate = (2S)-2-hydroxy-3-oxobutyl phosphate + formate + H(+). It carries out the reaction GTP + 4 H2O = 2,5-diamino-6-hydroxy-4-(5-phosphoribosylamino)-pyrimidine + formate + 2 phosphate + 3 H(+). Its pathway is cofactor biosynthesis; riboflavin biosynthesis; 2-hydroxy-3-oxobutyl phosphate from D-ribulose 5-phosphate: step 1/1. It functions in the pathway cofactor biosynthesis; riboflavin biosynthesis; 5-amino-6-(D-ribitylamino)uracil from GTP: step 1/4. Functionally, catalyzes the conversion of D-ribulose 5-phosphate to formate and 3,4-dihydroxy-2-butanone 4-phosphate. In terms of biological role, catalyzes the conversion of GTP to 2,5-diamino-6-ribosylamino-4(3H)-pyrimidinone 5'-phosphate (DARP), formate and pyrophosphate. This chain is Riboflavin biosynthesis protein RibBA, found in Phocaeicola vulgatus (strain ATCC 8482 / DSM 1447 / JCM 5826 / CCUG 4940 / NBRC 14291 / NCTC 11154) (Bacteroides vulgatus).